The primary structure comprises 608 residues: Elongation factor 4 (608 aa).

One can recognise a tr-type G domain in the interval 11–193 (KKIRNFSIIA…QIVEKVPEPS (183 aa)). Residues 23–28 (DHGKST) and 140–143 (NKID) each bind GTP.

It belongs to the TRAFAC class translation factor GTPase superfamily. Classic translation factor GTPase family. LepA subfamily.

The protein localises to the cell membrane. It catalyses the reaction GTP + H2O = GDP + phosphate + H(+). Functionally, required for accurate and efficient protein synthesis under certain stress conditions. May act as a fidelity factor of the translation reaction, by catalyzing a one-codon backward translocation of tRNAs on improperly translocated ribosomes. Back-translocation proceeds from a post-translocation (POST) complex to a pre-translocation (PRE) complex, thus giving elongation factor G a second chance to translocate the tRNAs correctly. Binds to ribosomes in a GTP-dependent manner. In Listeria monocytogenes serotype 4b (strain CLIP80459), this protein is Elongation factor 4.